A 255-amino-acid chain; its full sequence is NAD kinase (255 aa).

Aspartate 44 serves as the catalytic Proton acceptor. NAD(+) contacts are provided by residues aspartate 44–glycine 45, histidine 49, asparagine 114–glutamate 115, aspartate 144, alanine 152, serine 155–serine 160, and glutamine 216.

The protein belongs to the NAD kinase family. A divalent metal cation serves as cofactor.

Its subcellular location is the cytoplasm. It carries out the reaction NAD(+) + ATP = ADP + NADP(+) + H(+). Its function is as follows. Involved in the regulation of the intracellular balance of NAD and NADP, and is a key enzyme in the biosynthesis of NADP. Catalyzes specifically the phosphorylation on 2'-hydroxyl of the adenosine moiety of NAD to yield NADP. The polypeptide is NAD kinase (Rickettsia peacockii (strain Rustic)).